The sequence spans 416 residues: Proline-serine-threonine phosphatase-interacting protein 1 (416 aa).

Positions Leu-5 to Asp-264 constitute an F-BAR domain. Positions His-166–Thr-212 form a coiled coil. Ser-318 carries the post-translational modification Phosphoserine. Tyr-345 is modified (phosphotyrosine). Positions Ser-359 to Leu-416 constitute an SH3 domain.

Homodimer. Homotrimer. Interacts (via coiled-coil domain) with CD2AP, PTPN12 and PTPN18. Interacts (via SH3 domain) with ABL1 and WAS. Interacts (via SH3 and coiled-coil domains) with MEFV (via B-box zinc finger); the interaction allows binding of MEFV to PYCARD and facilitates formation of PYCARD pyroptosomes. Interacts with CD2, DNM2 and FASLG. Dephosphorylated on Tyr-345 by PTPN18, this event negatively regulates the association of PSTPIP1 with SH2 domain-containing proteins as tyrosine kinase. Phosphorylation of Tyr-345 is probably required for subsequent phosphorylation at other tyrosine residues. Phosphorylation is induced by activation of the EGFR and PDGFR in a ABL1 dependent manner. The phosphorylation regulates the interaction with WAS and with MEFV. Highly expressed in the peripheral blood leukocytes, granulocytes and monocytes, namely in T-cells and natural killer cells, and in spleen. Weakly expressed in the thymus, small intestine, lung and placenta.

The protein resides in the cytoplasm. The protein localises to the cell membrane. It localises to the cell projection. Its subcellular location is the uropodium. It is found in the cytoskeleton. The protein resides in the perinuclear region. The protein localises to the lamellipodium. It localises to the cleavage furrow. In terms of biological role, involved in regulation of the actin cytoskeleton. May regulate WAS actin-bundling activity. Bridges the interaction between ABL1 and PTPN18 leading to ABL1 dephosphorylation. May play a role as a scaffold protein between PTPN12 and WAS and allow PTPN12 to dephosphorylate WAS. Has the potential to physically couple CD2 and CD2AP to WAS. Acts downstream of CD2 and CD2AP to recruit WAS to the T-cell:APC contact site so as to promote the actin polymerization required for synapse induction during T-cell activation. Down-regulates CD2-stimulated adhesion through the coupling of PTPN12 to CD2. Also has a role in innate immunity and the inflammatory response. Recruited to inflammasomes by MEFV. Induces formation of pyroptosomes, large supramolecular structures composed of oligomerized PYCARD dimers which form prior to inflammatory apoptosis. Binding to MEFV allows MEFV to bind to PYCARD and facilitates pyroptosome formation. Regulates endocytosis and cell migration in neutrophils. In Homo sapiens (Human), this protein is Proline-serine-threonine phosphatase-interacting protein 1 (PSTPIP1).